Consider the following 92-residue polypeptide: Progonadoliberin-1 (92 aa).

The first 23 residues, M1–A23, serve as a signal peptide directing secretion. Residue Q24 is modified to Pyrrolidone carboxylic acid. G33 carries the glycine amide modification.

Belongs to the GnRH family.

The protein localises to the secreted. Stimulates the secretion of gonadotropins; it stimulates the secretion of both luteinizing and follicle-stimulating hormones. This chain is Progonadoliberin-1 (GNRH1), found in Tupaia belangeri (Common tree shrew).